The following is a 180-amino-acid chain: Large ribosomal subunit protein uL10 (180 aa).

This sequence belongs to the universal ribosomal protein uL10 family. Part of the ribosomal stalk of the 50S ribosomal subunit. The N-terminus interacts with L11 and the large rRNA to form the base of the stalk. The C-terminus forms an elongated spine to which L12 dimers bind in a sequential fashion forming a multimeric L10(L12)X complex.

Functionally, forms part of the ribosomal stalk, playing a central role in the interaction of the ribosome with GTP-bound translation factors. The polypeptide is Large ribosomal subunit protein uL10 (rplJ) (Treponema pallidum (strain Nichols)).